The sequence spans 80 residues: Iota-conotoxin-like r11c (80 aa).

Positions 1 to 19 (MKLCLTFLLVLMILASVTG) are cleaved as a signal peptide. The propeptide occupies 20–35 (EKSSKHTLSRAARVKN). P38 and P47 each carry 4-hydroxyproline; partial. 4 disulfides stabilise this stretch: C41-C55, C48-C58, C54-C63, and C57-C72. P65 carries the post-translational modification 4-hydroxyproline. At L78 the chain carries D-leucine. A propeptide (removed by a carboxypeptidase) is located at residue R80.

In terms of processing, the natural D-Leu form of the peptide is more potent than the synthetic L-Leu form. As to expression, expressed by the venom duct.

The protein resides in the secreted. Functionally, iota-conotoxins bind to voltage-gated sodium channels (Nav) and act as agonists by shifting the voltage-dependence of activation to more hyperpolarized levels. Causes circular motion, convulsions, copious urination, rigid paralysis and death upon intracranial injection into mice. Causes unbalanced swimming, swimming in diagonal and vertical motion and death, when injected intraperitoneally into goldfish. L-Leu and D-Leu forms are active on both nerve and muscle. The protein is Iota-conotoxin-like r11c of Conus radiatus (Rayed cone).